A 130-amino-acid polypeptide reads, in one-letter code: PAGPFRLPRCRKEFQQAQHLRACQQWLHKQARQSGSGPSPQGPQQRPPLLQQCCNELHQEEPLCVCPTLKGAAKAVKQQIQQQGQQHGQQGQQLQHEIRRIYQTATHLPKVCNIPQVQVCPFNKTMPGPS.

Positions 27-49 (LHKQARQSGSGPSPQGPQQRPPL) are disordered. A compositionally biased stretch (low complexity) spans 32 to 49 (RQSGSGPSPQGPQQRPPL).

This sequence belongs to the 2S seed storage albumins family. As to quaternary structure, the protein consists of two chains linked by disulfide bonds.

Inhibits trypsin with a Ki of 7 x 10(-6) M. The protein is Trypsin inhibitor of Mutarda arvensis (Charlock mustard).